A 331-amino-acid polypeptide reads, in one-letter code: GTP 3',8-cyclase (331 aa).

The 225-residue stretch at 9–233 (SFGRQVTYVR…TATNEHTGGP (225 aa)) folds into the Radical SAM core domain. Arg-18 is a binding site for GTP. The [4Fe-4S] cluster site is built by Cys-25 and Cys-29. Tyr-31 serves as a coordination point for S-adenosyl-L-methionine. Cys-32 contributes to the [4Fe-4S] cluster binding site. Arg-67 serves as a coordination point for GTP. An S-adenosyl-L-methionine-binding site is contributed by Gly-71. Thr-98 contributes to the GTP binding site. Ser-122 contributes to the S-adenosyl-L-methionine binding site. Lys-159 is a binding site for GTP. Met-193 is a binding site for S-adenosyl-L-methionine. Residues Cys-257 and Cys-260 each coordinate [4Fe-4S] cluster. Position 262–264 (262–264 (RVR)) interacts with GTP. [4Fe-4S] cluster is bound at residue Cys-274.

This sequence belongs to the radical SAM superfamily. MoaA family. In terms of assembly, monomer and homodimer. The cofactor is [4Fe-4S] cluster.

It carries out the reaction GTP + AH2 + S-adenosyl-L-methionine = (8S)-3',8-cyclo-7,8-dihydroguanosine 5'-triphosphate + 5'-deoxyadenosine + L-methionine + A + H(+). The protein operates within cofactor biosynthesis; molybdopterin biosynthesis. Its function is as follows. Catalyzes the cyclization of GTP to (8S)-3',8-cyclo-7,8-dihydroguanosine 5'-triphosphate. This is GTP 3',8-cyclase from Saccharophagus degradans (strain 2-40 / ATCC 43961 / DSM 17024).